Here is a 151-residue protein sequence, read N- to C-terminus: S-ribosylhomocysteine lyase (151 aa).

Histidine 54, histidine 58, and cysteine 121 together coordinate Fe cation.

It belongs to the LuxS family. In terms of assembly, homodimer. Fe cation serves as cofactor.

The enzyme catalyses S-(5-deoxy-D-ribos-5-yl)-L-homocysteine = (S)-4,5-dihydroxypentane-2,3-dione + L-homocysteine. Involved in the synthesis of autoinducer 2 (AI-2) which is secreted by bacteria and is used to communicate both the cell density and the metabolic potential of the environment. The regulation of gene expression in response to changes in cell density is called quorum sensing. Catalyzes the transformation of S-ribosylhomocysteine (RHC) to homocysteine (HC) and 4,5-dihydroxy-2,3-pentadione (DPD). The polypeptide is S-ribosylhomocysteine lyase (Clostridium botulinum (strain Alaska E43 / Type E3)).